The primary structure comprises 280 residues: Protease HtpX (280 aa).

2 helical membrane-spanning segments follow: residues 7 to 26 (TFIL…GLLG) and 30 to 49 (GMLV…YWYS). Histidine 129 serves as a coordination point for Zn(2+). Residue glutamate 130 is part of the active site. Position 133 (histidine 133) interacts with Zn(2+). Transmembrane regions (helical) follow at residues 146 to 166 (ATIA…SMFG) and 178 to 198 (VVGM…QMAI). Residue glutamate 203 participates in Zn(2+) binding.

The protein belongs to the peptidase M48B family. It depends on Zn(2+) as a cofactor.

It localises to the cell inner membrane. The polypeptide is Protease HtpX (Legionella pneumophila (strain Lens)).